Reading from the N-terminus, the 238-residue chain is Survival of motor neuron-related-splicing factor 30 (238 aa).

Residues serine 72–lysine 132 enclose the Tudor domain. Positions lysine 142–lysine 160 match the Nuclear localization signal motif. Serine 201 is modified (phosphoserine). Position 219 is an N6-acetyllysine (lysine 219).

Belongs to the SMN family. As to quaternary structure, associates with spliceosomes. Associates with U4/U5/U6 tri-snRNP and with U2 snRNP.

It is found in the nucleus speckle. The protein resides in the nucleus. It localises to the cajal body. Functionally, involved in spliceosome assembly. This Bos taurus (Bovine) protein is Survival of motor neuron-related-splicing factor 30 (SMNDC1).